Reading from the N-terminus, the 230-residue chain is Carbohydrate deacetylase (230 aa).

Positions 59 and 123 each coordinate Mg(2+).

Belongs to the YdjC deacetylase family. As to quaternary structure, homodimer. Requires Mg(2+) as cofactor.

Functionally, probably catalyzes the deacetylation of acetylated carbohydrates an important step in the degradation of oligosaccharides. This chain is Carbohydrate deacetylase, found in Oceanobacillus iheyensis (strain DSM 14371 / CIP 107618 / JCM 11309 / KCTC 3954 / HTE831).